A 211-amino-acid polypeptide reads, in one-letter code: Ubiquitin-conjugating enzyme E2 S-B (211 aa).

In terms of domain architecture, UBC core spans 11–157 (HIIRRVYKEV…ARLMTDIHAQ (147 aa)). C95 serves as the catalytic Glycyl thioester intermediate. The disordered stretch occupies residues 158 to 211 (GTSLRGKDPTDPCSSASTPVVSGDGPMAKKHAGDRDKKLAAKKKTDKKRALRRL). The span at 197–211 (AAKKKTDKKRALRRL) shows a compositional bias: basic residues.

It belongs to the ubiquitin-conjugating enzyme family.

It carries out the reaction S-ubiquitinyl-[E1 ubiquitin-activating enzyme]-L-cysteine + [E2 ubiquitin-conjugating enzyme]-L-cysteine = [E1 ubiquitin-activating enzyme]-L-cysteine + S-ubiquitinyl-[E2 ubiquitin-conjugating enzyme]-L-cysteine.. The protein operates within protein modification; protein ubiquitination. In terms of biological role, catalyzes the covalent attachment of ubiquitin to other proteins. Acts as an essential factor of the anaphase promoting complex/cyclosome (APC/C), a cell cycle-regulated ubiquitin ligase that controls progression through mitosis. Acts by specifically elongating 'Lys-11'-linked polyubiquitin chains initiated by the E2 enzyme ube2c/ubch10 on APC/C substrates, enhancing the degradation of APC/C substrates by the proteasome and promoting mitotic exit. This Xenopus laevis (African clawed frog) protein is Ubiquitin-conjugating enzyme E2 S-B (ube2s-b).